The following is a 551-amino-acid chain: Arginine--tRNA ligase (551 aa).

A 'HIGH' region motif is present at residues 125 to 135 (ANPTGPLHIGH).

It belongs to the class-I aminoacyl-tRNA synthetase family. In terms of assembly, monomer.

The protein localises to the cytoplasm. It catalyses the reaction tRNA(Arg) + L-arginine + ATP = L-arginyl-tRNA(Arg) + AMP + diphosphate. In Nitratidesulfovibrio vulgaris (strain ATCC 29579 / DSM 644 / CCUG 34227 / NCIMB 8303 / VKM B-1760 / Hildenborough) (Desulfovibrio vulgaris), this protein is Arginine--tRNA ligase.